A 696-amino-acid polypeptide reads, in one-letter code: Two-component response regulator ORR22 (696 aa).

The Response regulatory domain maps to 27-142 (RVLAVDDDPV…ELRNIWQHVV (116 aa)). Aspartate 78 is subject to 4-aspartylphosphate. Residues 154-214 (LDFSKECNKP…DYQENDEPSA (61 aa)) form a disordered region. A compositionally biased stretch (polar residues) spans 176-185 (TCGSSDQNGR). Acidic residues predominate over residues 195–211 (GEDDDEGDDNDYQENDE). Residues 214–273 (AAKKPRVVWSVELHRKFVAAVNQLGIDKAVPKRILELMNVEKLTRENVASHLQKYRLYLK) constitute a DNA-binding region (myb-like GARP).

Belongs to the ARR family. Type-B subfamily. Two-component system major event consists of a His-to-Asp phosphorelay between a sensor histidine kinase (HK) and a response regulator (RR). In plants, the His-to-Asp phosphorelay involves an additional intermediate named Histidine-containing phosphotransfer protein (HPt). This multistep phosphorelay consists of a His-Asp-His-Asp sequential transfer of a phosphate group between first a His and an Asp of the HK protein, followed by the transfer to a conserved His of the HPt protein and finally the transfer to an Asp in the receiver domain of the RR protein.

It localises to the nucleus. Transcriptional activator that binds specific DNA sequence. Functions as a response regulator involved in His-to-Asp phosphorelay signal transduction system. Phosphorylation of the Asp residue in the receiver domain activates the ability of the protein to promote the transcription of target genes. May directly activate some type-A response regulators in response to cytokinins. The polypeptide is Two-component response regulator ORR22 (Oryza sativa subsp. indica (Rice)).